A 281-amino-acid chain; its full sequence is Bis(5'-nucleosyl)-tetraphosphatase, symmetrical (281 aa).

This sequence belongs to the Ap4A hydrolase family.

It carries out the reaction P(1),P(4)-bis(5'-adenosyl) tetraphosphate + H2O = 2 ADP + 2 H(+). Its function is as follows. Hydrolyzes diadenosine 5',5'''-P1,P4-tetraphosphate to yield ADP. This chain is Bis(5'-nucleosyl)-tetraphosphatase, symmetrical, found in Delftia acidovorans (strain DSM 14801 / SPH-1).